The chain runs to 564 residues: Centrosomal protein kizuna (564 aa).

Residues 1 to 21 form a disordered region; it reads MSEAGRAAAGPCPEVSPSRSQ. The stretch at 28-50 forms a coiled coil; sequence RCLRDSETRRLELERKLMEYKSS. Disordered regions lie at residues 178 to 201, 304 to 345, 442 to 465, 487 to 519, and 531 to 564; these read QPAACPNSLTALQGDETDGHPTQA, TGPQ…EDEP, ECGDGSSVQSNESSYSLPSIPNDS, IGNNGSEAKESQEMCSERSSSSERSGDLSRPEF, and AFWGESDDSSSEAVDALRPQTRSPEADDFDDFYD. Positions 313–324 are enriched in low complexity; it reads QQAASQDSSSSS. Over residues 447–463 the composition is skewed to polar residues; sequence SSVQSNESSYSLPSIPN. The segment covering 493–519 has biased composition (basic and acidic residues); that stretch reads EAKESQEMCSERSSSSERSGDLSRPEF.

Belongs to the kizuna family.

The protein localises to the cytoplasm. The protein resides in the cytoskeleton. It is found in the microtubule organizing center. It localises to the centrosome. Its subcellular location is the cilium basal body. Its function is as follows. Centrosomal protein required for establishing a robust mitotic centrosome architecture that can endure the forces that converge on the centrosomes during spindle formation. Required for stabilizing the expanded pericentriolar material around the centriole. The polypeptide is Centrosomal protein kizuna (KIZ) (Gallus gallus (Chicken)).